Reading from the N-terminus, the 70-residue chain is Small ribosomal subunit protein bS21 (70 aa).

It belongs to the bacterial ribosomal protein bS21 family.

The protein is Small ribosomal subunit protein bS21 of Cupriavidus pinatubonensis (strain JMP 134 / LMG 1197) (Cupriavidus necator (strain JMP 134)).